Reading from the N-terminus, the 456-residue chain is GTPase Der (456 aa).

EngA-type G domains lie at 4 to 169 and 177 to 352; these read PIVA…PAVE and IKVA…ESHK. Residues 10 to 17, 57 to 61, 120 to 123, 183 to 190, 230 to 234, and 295 to 298 each bind GTP; these read GRPNVGKS, DTGGL, NKCE, DTAGI, and NKWD. A KH-like domain is found at 353–438; the sequence is RRVSTSVINE…PIILLWRSKK (86 aa).

Belongs to the TRAFAC class TrmE-Era-EngA-EngB-Septin-like GTPase superfamily. EngA (Der) GTPase family. In terms of assembly, associates with the 50S ribosomal subunit.

Functionally, GTPase that plays an essential role in the late steps of ribosome biogenesis. The protein is GTPase Der of Nostoc punctiforme (strain ATCC 29133 / PCC 73102).